The sequence spans 518 residues: Reduced folate transporter (518 aa).

N-acetylmethionine is present on methionine 1. Residues 1–29 are Cytoplasmic-facing; it reads MVPTGQVAEKQACEEPRQDRELKSWRCLV. The helical transmembrane segment at 30–50 threads the bilayer; sequence FYLCFFGFMAQLRPGESFITP. 2 residues coordinate folate: isoleucine 48 and threonine 49. Residues 51–62 are Extracellular-facing; it reads YLLQQNFTIEQV. Asparagine 56 carries an N-linked (GlcNAc...) asparagine glycan. A helical membrane pass occupies residues 63 to 85; the sequence is TNEIIPVLPYSHLAVLVPIFLLT. Residues 86–89 are Cytoplasmic-facing; sequence DYLR. Residues 90–110 form a helical membrane-spanning segment; that stretch reads YKPILILQCLSFMCVWLLLLL. The Extracellular segment spans residues 111–114; sequence GTSV. The helical transmembrane segment at 115 to 137 threads the bilayer; the sequence is VHMQLMEVFYSVTMAARIAYSSY. Positions 121 and 131 each coordinate folate. Over 138-151 the chain is Cytoplasmic; the sequence is IFSLVRPSRYQRMA. The chain crosses the membrane as a helical span at residues 152-176; sequence SYSRAAVLLGVFTSSVLGQVLWPLE. Residue valine 162 participates in folate binding. Over 177–181 the chain is Extracellular; that stretch reads QKSQN. Residues 182–200 form a helical membrane-spanning segment; it reads SNMLNYISLGFIIFSLGLS. At 201–266 the chain is on the cytoplasmic side; it reads LFLKRPKHSL…LSELVGNLRQ (66 aa). Residues 267–292 traverse the membrane as a helical segment; it reads PQLRLWCLWWVFNSAGYYLIVYYVHV. 3 residues coordinate folate: alanine 281, glycine 282, and isoleucine 286. The Extracellular portion of the chain corresponds to 293 to 300; the sequence is LWSIDKNL. A helical transmembrane segment spans residues 301–323; the sequence is NYNGAVDAASTLLSAITSFSAGF. At 324–329 the chain is on the cytoplasmic side; it reads VKIRWA. The helical transmembrane segment at 330–350 threads the bilayer; it reads LWSKLVIASVIAIQAGLVFCM. Residues 351–353 are Extracellular-facing; sequence YMV. Residues 354 to 377 form a helical membrane-spanning segment; the sequence is HYVTWVHKIWVLYMTYVLFRGAYQ. The folate site is built by tyrosine 366 and valine 370. Residues 378–391 lie on the Cytoplasmic side of the membrane; that stretch reads FLVPIATFQIASSL. The helical transmembrane segment at 392-415 threads the bilayer; sequence SKELCALVFGINTFLATALKTAIT. The interval 407-419 is required for substrate-binding; the sequence is ATALKTAITLVVS. The Extracellular segment spans residues 416 to 423; the sequence is LVVSDKRG. Residues 424–448 traverse the membrane as a helical segment; it reads LGLKVEKQFCIYSVYFMVLSVICFV. Residues 449-512 are Cytoplasmic-facing; it reads GAVLDGVRYC…DGVEDSEASL (64 aa). Phosphoserine occurs at positions 473, 478, and 483. The disordered stretch occupies residues 480-518; that stretch reads QVPSMQDGGLGGLQPSAPQLLPEDGVEDSEASLRAEAKA.

The protein belongs to the reduced folate carrier (RFC) transporter (TC 2.A.48) family.

The protein resides in the cell membrane. It localises to the apical cell membrane. The protein localises to the basolateral cell membrane. The enzyme catalyses 5-amino-1-(5-phospho-beta-D-ribosyl)imidazole-4-carboxamide(in) + (6S)-5-methyl-5,6,7,8-tetrahydrofolate(out) = 5-amino-1-(5-phospho-beta-D-ribosyl)imidazole-4-carboxamide(out) + (6S)-5-methyl-5,6,7,8-tetrahydrofolate(in). Antiporter that mediates the import of reduced folates, driven by the export of organic anions. Also acts as an importer of immunoreactive cyclic dinucleotides, but with a lower transporter activity. Mechanistically, acts as a secondary active transporter, which exports intracellular organic anions down their concentration gradients to facilitate the uptake of its substrates. Has high affinity for N5-methyltetrahydrofolate, the predominant circulating form of folate. Also mediates the import of antifolate drug methotrexate. 5-amino-4-imidazolecarboxamide riboside (AICAR), when phosphorylated to AICAR monophosphate, can serve as an organic anion for antiporter activity. The protein is Reduced folate transporter of Cricetulus griseus (Chinese hamster).